A 417-amino-acid polypeptide reads, in one-letter code: Biofilm dispersion protein BdlA (417 aa).

Residues 1–66 form the PAS 1 domain; it reads MAALDRSMAR…RRFWERLRRG (66 aa). Residues 67–114 form the PAC 1 domain; that stretch reads EHFSGRCKRITREGRPLWLEATYNPVRDGQGRLLKVVKYASDIDAIVH. Positions 115 to 188 constitute a PAS 2 domain; it reads QEHEMQSKLD…ADLWRRLNRG (74 aa). In terms of domain architecture, PAC 2 spans 191–241; that stretch reads VTGQFRRVHRNGQPVWLEASYNPVYDADGKLYKVVKFASDVSDRMRRYQAE. The region spanning 242–417 is the Methyl-accepting transducer domain; it reads ADNAHQAHTL…QFSRTLNADL (176 aa).

Essential for biofilm dispersion by sensing environmental cues. May be involved in sensing and transducing signals within cells, resulting in the modulation of c-di-GMP levels, swimming motility and adhesiveness of the bacterial cell surface. In Pseudomonas aeruginosa (strain ATCC 15692 / DSM 22644 / CIP 104116 / JCM 14847 / LMG 12228 / 1C / PRS 101 / PAO1), this protein is Biofilm dispersion protein BdlA (bdlA).